A 596-amino-acid chain; its full sequence is Elongation factor 4 (596 aa).

The tr-type G domain occupies 2 to 184; it reads KHIRNFSIIA…VIVEQIPPPE (183 aa). Residues 14 to 19 and 131 to 134 contribute to the GTP site; these read DHGKST and NKID.

Belongs to the TRAFAC class translation factor GTPase superfamily. Classic translation factor GTPase family. LepA subfamily.

Its subcellular location is the cell inner membrane. It catalyses the reaction GTP + H2O = GDP + phosphate + H(+). In terms of biological role, required for accurate and efficient protein synthesis under certain stress conditions. May act as a fidelity factor of the translation reaction, by catalyzing a one-codon backward translocation of tRNAs on improperly translocated ribosomes. Back-translocation proceeds from a post-translocation (POST) complex to a pre-translocation (PRE) complex, thus giving elongation factor G a second chance to translocate the tRNAs correctly. Binds to ribosomes in a GTP-dependent manner. In Shewanella piezotolerans (strain WP3 / JCM 13877), this protein is Elongation factor 4.